Here is a 122-residue protein sequence, read N- to C-terminus: Ribonuclease P protein component (122 aa).

The protein belongs to the RnpA family. As to quaternary structure, consists of a catalytic RNA component (M1 or rnpB) and a protein subunit.

It catalyses the reaction Endonucleolytic cleavage of RNA, removing 5'-extranucleotides from tRNA precursor.. Functionally, RNaseP catalyzes the removal of the 5'-leader sequence from pre-tRNA to produce the mature 5'-terminus. It can also cleave other RNA substrates such as 4.5S RNA. The protein component plays an auxiliary but essential role in vivo by binding to the 5'-leader sequence and broadening the substrate specificity of the ribozyme. This chain is Ribonuclease P protein component, found in Lactobacillus helveticus (strain DPC 4571).